The following is a 590-amino-acid chain: Protein ecdysoneless homolog (590 aa).

A disordered region spans residues Glu-445–Asp-464. Over residues Thr-455–Asp-464 the composition is skewed to acidic residues.

Belongs to the ECD family.

Its subcellular location is the cytoplasm. The protein localises to the nucleus. Its function is as follows. Involved in the regulation of carbohydrate metabolism. May act as a transcription factor. The protein is Protein ecdysoneless homolog of Schizosaccharomyces pombe (strain 972 / ATCC 24843) (Fission yeast).